The chain runs to 210 residues: Uracil phosphoribosyltransferase (210 aa).

5-phospho-alpha-D-ribose 1-diphosphate is bound by residues Arg-78, Arg-103, and 130–138 (DPMLATGGT). Uracil is bound by residues Ile-193 and 198-200 (GDA). Asp-199 is a binding site for 5-phospho-alpha-D-ribose 1-diphosphate.

This sequence belongs to the UPRTase family. Requires Mg(2+) as cofactor.

It carries out the reaction UMP + diphosphate = 5-phospho-alpha-D-ribose 1-diphosphate + uracil. It functions in the pathway pyrimidine metabolism; UMP biosynthesis via salvage pathway; UMP from uracil: step 1/1. With respect to regulation, allosterically activated by GTP. Catalyzes the conversion of uracil and 5-phospho-alpha-D-ribose 1-diphosphate (PRPP) to UMP and diphosphate. This chain is Uracil phosphoribosyltransferase, found in Xanthomonas campestris pv. campestris (strain 8004).